The sequence spans 124 residues: Small ribosomal subunit protein uS12 (124 aa).

Aspartate 89 is subject to 3-methylthioaspartic acid.

It belongs to the universal ribosomal protein uS12 family. As to quaternary structure, part of the 30S ribosomal subunit. Contacts proteins S8 and S17. May interact with IF1 in the 30S initiation complex.

With S4 and S5 plays an important role in translational accuracy. In terms of biological role, interacts with and stabilizes bases of the 16S rRNA that are involved in tRNA selection in the A site and with the mRNA backbone. Located at the interface of the 30S and 50S subunits, it traverses the body of the 30S subunit contacting proteins on the other side and probably holding the rRNA structure together. The combined cluster of proteins S8, S12 and S17 appears to hold together the shoulder and platform of the 30S subunit. This Blochmanniella pennsylvanica (strain BPEN) protein is Small ribosomal subunit protein uS12.